The primary structure comprises 72 residues: Toxin Acra II-2 (72 aa).

Residues 3–67 enclose the LCN-type CS-alpha/beta domain; it reads VPGNYPLNTN…VWNAAKNYCK (65 aa). 3 disulfide bridges follow: cysteine 18/cysteine 41, cysteine 27/cysteine 46, and cysteine 31/cysteine 48.

The protein belongs to the long (3 C-C) scorpion toxin superfamily. Sodium channel inhibitor family. Beta subfamily. In terms of tissue distribution, expressed by the venom gland.

It is found in the secreted. Functionally, binds to sodium channels (Nav) and affects the channel activation process. The chain is Toxin Acra II-2 from Androctonus crassicauda (Arabian fat-tailed scorpion).